The chain runs to 340 residues: Protein B17 (340 aa).

It belongs to the orthopoxvirus B17 protein family.

The polypeptide is Protein B17 (Vaccinia virus (strain Copenhagen) (VACV)).